A 1128-amino-acid polypeptide reads, in one-letter code: Scavenger receptor cysteine-rich domain superfamily protein (1128 aa).

Positions 1-24 are cleaved as a signal peptide; that stretch reads MTSLRRGNICWVAVCAALLTLTRG. Residues 25-1051 lie on the Extracellular side of the membrane; that stretch reads IDVIAKPSRT…VGAQAGPAGG (1027 aa). 9 SRCR domains span residues 40-140, 143-245, 248-348, 351-450, 453-553, 555-654, 657-757, 759-866, and 868-968; these read VQLV…VVCN, VRLA…VICT, IRLV…VICT, VRLV…AKCQ, VQLV…VVCR, IRLA…VVCR, LRLA…VVCT, LRLT…VLCK, and IRLV…VQCK. 21 cysteine pairs are disulfide-bonded: Cys-65/Cys-129, Cys-78/Cys-139, Cys-109/Cys-119, Cys-168/Cys-234, Cys-181/Cys-244, Cys-212/Cys-222, Cys-273/Cys-337, Cys-286/Cys-347, Cys-316/Cys-326, Cys-376/Cys-439, Cys-389/Cys-449, Cys-419/Cys-429, Cys-478/Cys-542, Cys-491/Cys-552, Cys-522/Cys-532, Cys-583/Cys-644, Cys-596/Cys-653, Cys-624/Cys-634, Cys-682/Cys-746, Cys-695/Cys-756, and Cys-726/Cys-736. Asn-87 is a glycosylation site (N-linked (GlcNAc...) asparagine). Residues Asn-190 and Asn-194 are each glycosylated (N-linked (GlcNAc...) asparagine). A glycan (N-linked (GlcNAc...) asparagine) is linked at Asn-229. Asn-422 carries an N-linked (GlcNAc...) asparagine glycan. Residues Asn-601 and Asn-612 are each glycosylated (N-linked (GlcNAc...) asparagine). Residues Asn-765, Asn-808, Asn-834, and Asn-936 are each glycosylated (N-linked (GlcNAc...) asparagine). 6 disulfides stabilise this stretch: Cys-803-Cys-865, Cys-833-Cys-843, Cys-906-Cys-967, Cys-937-Cys-947, Cys-971-Cys-1013, and Cys-999-Cys-1026. In terms of domain architecture, Sushi spans 969–1028; sequence AGCDWPGPIRHGSFSPNRSSYDPLTTIDVKCDAGYELMGSKTLQCVTGCDWSRPTPECQR. The N-linked (GlcNAc...) asparagine glycan is linked to Asn-985. The N-linked (GlcNAc...) asparagine glycan is linked to Asn-1031. The helical transmembrane segment at 1052-1072 threads the bilayer; it reads VMLIIGIILGAVVMMLIACVA. Over 1073–1128 the chain is Cytoplasmic; the sequence is LYLKGRNKNIGRGNPATTSAIWKPKKEFDELKEPVLSFSAMTAGGAGPEDGMGEDI.

From the mid-gastrula stage, expressed only in mesenchyme cells that are migrating toward the body wall. At the brachiolaria stage, expressed in presumptive coelomocytes of the coelomic pouch. Also expressed in adult coelomocytes (at protein level).

The protein resides in the cytoplasmic vesicle membrane. In terms of biological role, involved in aggregate formation and phagocytosis by larval mesenchyme cells and adult coelomocytes. Binds to bacteria and may act as an opsonin in the innate immune system. This chain is Scavenger receptor cysteine-rich domain superfamily protein, found in Patiria pectinifera (Starfish).